The sequence spans 147 residues: Small ribosomal subunit protein uS9 (147 aa).

The segment at 128-147 is disordered; that stretch reads KERKKYGQMGARAKYRWSKR.

This sequence belongs to the universal ribosomal protein uS9 family.

The sequence is that of Small ribosomal subunit protein uS9 (rpsI) from Aquifex aeolicus (strain VF5).